The following is a 119-amino-acid chain: Large ribosomal subunit protein uL22 (119 aa).

This sequence belongs to the universal ribosomal protein uL22 family. As to quaternary structure, part of the 50S ribosomal subunit.

In terms of biological role, this protein binds specifically to 23S rRNA; its binding is stimulated by other ribosomal proteins, e.g. L4, L17, and L20. It is important during the early stages of 50S assembly. It makes multiple contacts with different domains of the 23S rRNA in the assembled 50S subunit and ribosome. The globular domain of the protein is located near the polypeptide exit tunnel on the outside of the subunit, while an extended beta-hairpin is found that lines the wall of the exit tunnel in the center of the 70S ribosome. The polypeptide is Large ribosomal subunit protein uL22 (Microcystis aeruginosa (strain NIES-843 / IAM M-2473)).